The sequence spans 479 residues: UPF0164 protein TP_0865 (479 aa).

The first 49 residues, 1-49 (MVRMRRRRACSSGGACGCAAVRGARSFLSVRVLGMRIGMSALCLAPLFA), serve as a signal peptide directing secretion.

The protein belongs to the UPF0164 family.

The chain is UPF0164 protein TP_0865 from Treponema pallidum (strain Nichols).